Reading from the N-terminus, the 1039-residue chain is Pleckstrin homology domain-containing family G member 5 (1039 aa).

Disordered stretches follow at residues 58 to 105 (NVST…RRHT) and 185 to 277 (PGDE…SSES). 2 stretches are compositionally biased toward basic and acidic residues: residues 185–199 (PGDE…KDSK) and 217–228 (ERVDPQSRRESS). The span at 259-277 (SSCSLPVGSSVGSSGSSES) shows a compositional bias: low complexity. Positions 372–564 (HQQEAVWELL…ERFIHHVNTC (193 aa)) constitute a DH domain. The PH domain maps to 620 to 720 (QLLLEGSLRM…WVDTLYNAQN (101 aa)). Disordered stretches follow at residues 739–785 (QHLQ…ASDG) and 800–836 (TLSS…LLPL). Residues 744-757 (LEEEEDEQEEEGEE) show a composition bias toward acidic residues. Polar residues-rich tracts occupy residues 758–776 (SGTS…SNSL) and 811–831 (FSSQ…TPTS). Phosphothreonine is present on threonine 760. Serine 765 carries the phosphoserine modification. A Phosphothreonine modification is found at threonine 876. A phosphoserine mark is found at serine 878, serine 903, and serine 908. A disordered region spans residues 967-989 (PLSESENRPSHKAGGPADSARRK).

In terms of assembly, interacts with GIPC1/synectin and RHOA. As to expression, selectively expressed in cortical and hippocampal neurons with prominent expression in the cell bodies and dendrites. Weakly expressed in rat fad pad ECs (RFPECs).

It localises to the cytoplasm. It is found in the perinuclear region. The protein resides in the cell membrane. The protein localises to the cell junction. Its subcellular location is the cell projection. It localises to the lamellipodium. Its function is as follows. Functions as a guanine exchange factor (GEF) for RAB26 and thus regulates autophagy of synaptic vesicles in axon terminal of motoneurons. Involved in the control of neuronal cell differentiation. Plays a role in angiogenesis through regulation of endothelial cells chemotaxis. Also affects the migration, adhesion, and matrix/bone degradation in macrophages and osteoclasts. The polypeptide is Pleckstrin homology domain-containing family G member 5 (Plekhg5) (Rattus norvegicus (Rat)).